The chain runs to 423 residues: Glucose-1-phosphate adenylyltransferase (423 aa).

Residues Tyr98, Gly163, 178 to 179 (EK), and Ser189 each bind alpha-D-glucose 1-phosphate.

Belongs to the bacterial/plant glucose-1-phosphate adenylyltransferase family. In terms of assembly, homotetramer.

The enzyme catalyses alpha-D-glucose 1-phosphate + ATP + H(+) = ADP-alpha-D-glucose + diphosphate. It functions in the pathway glycan biosynthesis; glycogen biosynthesis. In terms of biological role, involved in the biosynthesis of ADP-glucose, a building block required for the elongation reactions to produce glycogen. Catalyzes the reaction between ATP and alpha-D-glucose 1-phosphate (G1P) to produce pyrophosphate and ADP-Glc. In Thermotoga neapolitana (strain ATCC 49049 / DSM 4359 / NBRC 107923 / NS-E), this protein is Glucose-1-phosphate adenylyltransferase.